Here is a 182-residue protein sequence, read N- to C-terminus: MKIDKKSLKRIVKVLLNKVPKEEAALIKVSDDLTLIQEIYRKDKDFRNFILNPSAPYEDKKKIIDSLSEKAGLDPVVKEALEYIVKTNKGNLLKIIGDEFRFEVEKFFATVKGEIITAYPIDEETINSVKEVVEKKLGKKVEFDIKQDPSIIGGIIVKAGSYILDSSLKTYLQKLEQQLTAF.

It belongs to the ATPase delta chain family. F-type ATPases have 2 components, F(1) - the catalytic core - and F(0) - the membrane proton channel. F(1) has five subunits: alpha(3), beta(3), gamma(1), delta(1), epsilon(1). F(0) has three main subunits: a(1), b(2) and c(10-14). The alpha and beta chains form an alternating ring which encloses part of the gamma chain. F(1) is attached to F(0) by a central stalk formed by the gamma and epsilon chains, while a peripheral stalk is formed by the delta and b chains.

Its subcellular location is the cell inner membrane. Functionally, f(1)F(0) ATP synthase produces ATP from ADP in the presence of a proton or sodium gradient. F-type ATPases consist of two structural domains, F(1) containing the extramembraneous catalytic core and F(0) containing the membrane proton channel, linked together by a central stalk and a peripheral stalk. During catalysis, ATP synthesis in the catalytic domain of F(1) is coupled via a rotary mechanism of the central stalk subunits to proton translocation. In terms of biological role, this protein is part of the stalk that links CF(0) to CF(1). It either transmits conformational changes from CF(0) to CF(1) or is implicated in proton conduction. This chain is ATP synthase subunit delta, found in Persephonella marina (strain DSM 14350 / EX-H1).